A 416-amino-acid chain; its full sequence is Casein kinase I isoform epsilon (416 aa).

Positions 9 to 277 (YRLGRKIGSG…YLRQLFRNLF (269 aa)) constitute a Protein kinase domain. Residues 15–23 (IGSGSFGDI) and lysine 38 contribute to the ATP site. Catalysis depends on aspartate 128, which acts as the Proton acceptor. The segment covering 301–318 (PEDVDRERREHEREERMG) has biased composition (basic and acidic residues). A disordered region spans residues 301–416 (PEDVDRERRE…TSVPFDHLGK (116 aa)). Phosphoserine is present on residues serine 343 and serine 354. The segment covering 351 to 365 (TPASRIQQTGNTSPR) has biased composition (polar residues). Residue threonine 362 is modified to Phosphothreonine. Phosphoserine is present on serine 363. Arginine 382 is subject to Omega-N-methylarginine. A phosphoserine mark is found at serine 389, serine 405, and serine 408.

The protein belongs to the protein kinase superfamily. CK1 Ser/Thr protein kinase family. Casein kinase I subfamily. Monomer. Component of the circadian core oscillator, which includes the CRY proteins, CLOCK, or NPAS2, ARTNL/BMAL1 or ARTNL2/BMAL2, CSNK1D and/or CSNK1E, TIMELESS and the PER proteins. Interacts with ANKRD6. Interacts with PER1. Interacts with DBNDD2, LRP5, LRP6 and SOCS3. Interacts with SNAI1 (via zinc fingers). Interacts with DDX3X; this interaction greatly enhances CSNK1E affinity for ATP and DVL2 phosphorylation, but inhibits DDX3X ATPase/helicase activity. In the presence of RNA, the interaction is decreased. Interacts with FAM83A, FAM83B, FAM83E and FAM83H (via DUF1669). Post-translationally, autophosphorylated. Partially dephosphorylated by PPP5C. May be dephosphorylated by PP1. In terms of tissue distribution, expressed in all tissues examined, including brain, heart, lung, liver, pancreas, kidney, placenta and skeletal muscle. Expressed in monocytes and lymphocytes but not in granulocytes.

Its subcellular location is the cytoplasm. The protein localises to the nucleus. The enzyme catalyses L-seryl-[protein] + ATP = O-phospho-L-seryl-[protein] + ADP + H(+). It catalyses the reaction L-threonyl-[protein] + ATP = O-phospho-L-threonyl-[protein] + ADP + H(+). Its activity is regulated as follows. Phosphorylation leads to a decrease in the catalytic activity. Functionally, casein kinases are operationally defined by their preferential utilization of acidic proteins such as caseins as substrates. Participates in Wnt signaling. Phosphorylates DVL1. Phosphorylates DVL2. Phosphorylates NEDD9/HEF1. Central component of the circadian clock. In balance with PP1, determines the circadian period length, through the regulation of the speed and rhythmicity of PER1 and PER2 phosphorylation. Controls PER1 and PER2 nuclear transport and degradation. Inhibits cytokine-induced granuloytic differentiation. The chain is Casein kinase I isoform epsilon (Csnk1e) from Mus musculus (Mouse).